Reading from the N-terminus, the 434-residue chain is Enolase (434 aa).

Residue Q165 coordinates (2R)-2-phosphoglycerate. E207 (proton donor) is an active-site residue. Residues D244, E291, and D318 each contribute to the Mg(2+) site. The (2R)-2-phosphoglycerate site is built by K343, R372, S373, and K394. K343 acts as the Proton acceptor in catalysis.

It belongs to the enolase family. Mg(2+) is required as a cofactor.

It is found in the cytoplasm. Its subcellular location is the secreted. The protein localises to the cell surface. It catalyses the reaction (2R)-2-phosphoglycerate = phosphoenolpyruvate + H2O. Its pathway is carbohydrate degradation; glycolysis; pyruvate from D-glyceraldehyde 3-phosphate: step 4/5. Functionally, catalyzes the reversible conversion of 2-phosphoglycerate (2-PG) into phosphoenolpyruvate (PEP). It is essential for the degradation of carbohydrates via glycolysis. In Macrococcus caseolyticus (strain JCSC5402) (Macrococcoides caseolyticum), this protein is Enolase.